Reading from the N-terminus, the 213-residue chain is Elongation factor 1-beta (213 aa).

Positions A67–A80 are enriched in low complexity. The tract at residues A67–D88 is disordered.

It belongs to the EF-1-beta/EF-1-delta family. As to quaternary structure, EF-1 is composed of 4 subunits: alpha, beta, delta, and gamma.

Its function is as follows. EF-1-beta and EF-1-delta stimulate the exchange of GDP bound to EF-1-alpha to GTP. The protein is Elongation factor 1-beta (EFB1) of Candida albicans (strain WO-1) (Yeast).